A 482-amino-acid polypeptide reads, in one-letter code: Thymidine phosphorylase (482 aa).

A propeptide spanning residues Met1–Gly10 is cleaved from the precursor. Residues Met1 to Leu36 form a disordered region. Thr6 bears the Phosphothreonine mark. Substrate contacts are provided by His116, Arg202, Ser217, and Lys221. R-V-A-A-A-L-X(5,6)-L-G-R repeat units follow at residues Arg265 to Arg279 and Arg329 to Arg342. R-A-L-X-X-A-L-V-L repeat units lie at residues Arg393–Leu401 and Arg453–Leu461.

Belongs to the thymidine/pyrimidine-nucleoside phosphorylase family. Homodimer.

It catalyses the reaction thymidine + phosphate = 2-deoxy-alpha-D-ribose 1-phosphate + thymine. It participates in pyrimidine metabolism; dTMP biosynthesis via salvage pathway; dTMP from thymine: step 1/2. Its function is as follows. May have a role in maintaining the integrity of the blood vessels. Has growth promoting activity on endothelial cells, angiogenic activity in vivo and chemotactic activity on endothelial cells in vitro. Functionally, catalyzes the reversible phosphorolysis of thymidine. The produced molecules are then utilized as carbon and energy sources or in the rescue of pyrimidine bases for nucleotide synthesis. This Homo sapiens (Human) protein is Thymidine phosphorylase.